The chain runs to 160 residues: MKNFEIVTVTPDHAEQLISMIHELAEFEKMKSSVVNTAEKLRKDIENKAVHGFIAFIGEEPAGMNLFYYAYSTWVGQYLHMEDLYIRPQFRRMGLARTLWKKLAELARDKGIVRLEWAVLDWNKNAIALYDTVDYVNLTKSEGWFTFRMDGAAINKFADE.

The N-acetyltransferase domain occupies 4–159; that stretch reads FEIVTVTPDH…DGAAINKFAD (156 aa). Acetyl-CoA contacts are provided by residues 84–86, 92–97, 123–126, and 130–133; these read LYI, RMGLAR, NKNA, and YDTV.

This sequence belongs to the acetyltransferase family. As to quaternary structure, homodimer.

It catalyses the reaction S-(2-aminoethyl)-L-cysteine + acetyl-CoA = S-(2-acetamidoethyl)-L-cysteine + CoA + H(+). It carries out the reaction O-(2-aminoethyl)-L-serine + acetyl-CoA = O-(2-acetamidoethyl)-L-serine + CoA + H(+). The enzyme catalyses S-(2-aminoethyl)-homocysteine + acetyl-CoA = S-(2-acetamidoethyl)-homocysteine + CoA + H(+). Functionally, catalyzes the N-acetylation of the amino acid thialysine (S-(2-aminoethyl)-L-cysteine), a L-lysine analog with the 4-methylene group substituted with a sulfur. Substrate specificity: thialysine &gt; O-(2-aminoethyl)-L-serine &gt; S-(2-aminoethyl)-D,L-homocysteine. Does not act on polyamines, such as spermidine and spermine, nor on diamines putrescine and cadaverine. The sequence is that of Thialysine N-epsilon-acetyltransferase from Caenorhabditis elegans.